Consider the following 246-residue polypeptide: Transmembrane protein 41 homolog (246 aa).

The next 6 helical transmembrane spans lie at 12-32 (WLVL…YSNF), 68-88 (SVVL…AIPG), 101-123 (PFYV…CYTI), 159-179 (IFLR…SPVL), 182-202 (PLAP…FLYI), and 219-239 (SWSS…PILL).

It belongs to the TMEM41 family.

The protein localises to the membrane. The chain is Transmembrane protein 41 homolog (tag-175) from Caenorhabditis elegans.